The chain runs to 365 residues: Outer membrane lipoprotein A (365 aa).

Positions 1–19 (MNIATKLMASLVASVVLTA) are cleaved as a signal peptide. Residues 19–121 (ACSGGGSSGS…KGEELSKDKS (103 aa)) are disordered. Residue Cys-20 is the site of N-palmitoyl cysteine attachment. Cys-20 is lipidated: S-diacylglycerol cysteine. Composition is skewed to basic and acidic residues over residues 48 to 68 (EQPKKEEVPQADNSKAEEPKE) and 105 to 121 (NPQKDAPKGEELSKDKS).

It is found in the cell outer membrane. In Actinobacillus pleuropneumoniae (Haemophilus pleuropneumoniae), this protein is Outer membrane lipoprotein A (omlA).